Here is a 432-residue protein sequence, read N- to C-terminus: Ubiquitin-like modifier-activating enzyme 5 (432 aa).

Residues Glu-25–Ala-47 are disordered. Polar residues predominate over residues Asn-29–Arg-44. Residues Gly-96, Asp-117, Lys-140, Asn-163, and Asn-196 each contribute to the ATP site. 2 residues coordinate Zn(2+): Cys-238 and Cys-241. Cys-262 serves as the catalytic Glycyl thioester intermediate. Cys-315 and Cys-320 together coordinate Zn(2+). Residues Asp-363 to Val-406 are disordered. The span at Pro-386 to Val-406 shows a compositional bias: polar residues.

This sequence belongs to the ubiquitin-activating E1 family. UBA5 subfamily. Interacts with ufc-1.

Its function is as follows. E1-like enzyme which activates ufm-1. Required for interaction between ufm-1 and ufc-1. The protein is Ubiquitin-like modifier-activating enzyme 5 of Caenorhabditis briggsae.